A 463-amino-acid polypeptide reads, in one-letter code: Glutamyl-tRNA(Gln) amidotransferase subunit A, mitochondrial (463 aa).

Catalysis depends on charge relay system residues lysine 47 and serine 124. Serine 148 functions as the Acyl-ester intermediate in the catalytic mechanism.

The protein belongs to the amidase family. GatA subfamily. Subunit of the heterotrimeric GatFAB amidotransferase (AdT) complex, composed of A, B and F subunits.

Its subcellular location is the mitochondrion. The catalysed reaction is L-glutamyl-tRNA(Gln) + L-glutamine + ATP + H2O = L-glutaminyl-tRNA(Gln) + L-glutamate + ADP + phosphate + H(+). In terms of biological role, allows the formation of correctly charged Gln-tRNA(Gln) through the transamidation of misacylated Glu-tRNA(Gln) in the mitochondria. The reaction takes place in the presence of glutamine and ATP through an activated gamma-phospho-Glu-tRNA(Gln). This Eremothecium gossypii (strain ATCC 10895 / CBS 109.51 / FGSC 9923 / NRRL Y-1056) (Yeast) protein is Glutamyl-tRNA(Gln) amidotransferase subunit A, mitochondrial.